We begin with the raw amino-acid sequence, 501 residues long: Phenylalanine--tRNA ligase alpha subunit (501 aa).

L-phenylalanine is bound by residues threonine 344, 383 to 385 (QID), and phenylalanine 424. Glutamate 426 serves as a coordination point for Mg(2+). Residue phenylalanine 449 participates in L-phenylalanine binding.

It belongs to the class-II aminoacyl-tRNA synthetase family. Phe-tRNA synthetase alpha subunit type 2 subfamily. As to quaternary structure, tetramer of two alpha and two beta subunits. Mg(2+) serves as cofactor.

It localises to the cytoplasm. It carries out the reaction tRNA(Phe) + L-phenylalanine + ATP = L-phenylalanyl-tRNA(Phe) + AMP + diphosphate + H(+). This Thermococcus kodakarensis (strain ATCC BAA-918 / JCM 12380 / KOD1) (Pyrococcus kodakaraensis (strain KOD1)) protein is Phenylalanine--tRNA ligase alpha subunit.